The primary structure comprises 232 residues: Ion-translocating oxidoreductase complex subunit E (232 aa).

The next 6 membrane-spanning stretches (helical) occupy residues 18–38 (GLVQ…ITNA), 39–59 (LGLG…VSLV), 69–89 (IPVF…LINA), 93–113 (GLYL…IIIG), 127–147 (AAFD…VLGA), and 182–202 (PFLL…LIAL).

It belongs to the NqrDE/RnfAE family. The complex is composed of six subunits: RnfA, RnfB, RnfC, RnfD, RnfE and RnfG.

Its subcellular location is the cell inner membrane. Part of a membrane-bound complex that couples electron transfer with translocation of ions across the membrane. This Shewanella baltica (strain OS185) protein is Ion-translocating oxidoreductase complex subunit E.